Reading from the N-terminus, the 891-residue chain is Alanine--tRNA ligase (891 aa).

The Zn(2+) site is built by His564, His568, Cys677, and His681.

It belongs to the class-II aminoacyl-tRNA synthetase family. It depends on Zn(2+) as a cofactor.

It is found in the cytoplasm. The enzyme catalyses tRNA(Ala) + L-alanine + ATP = L-alanyl-tRNA(Ala) + AMP + diphosphate. Its function is as follows. Catalyzes the attachment of alanine to tRNA(Ala) in a two-step reaction: alanine is first activated by ATP to form Ala-AMP and then transferred to the acceptor end of tRNA(Ala). Also edits incorrectly charged Ser-tRNA(Ala) and Gly-tRNA(Ala) via its editing domain. The protein is Alanine--tRNA ligase of Rhodopseudomonas palustris (strain BisA53).